A 136-amino-acid polypeptide reads, in one-letter code: Glycine-rich RNA-binding protein 4, mitochondrial (136 aa).

The transit peptide at 1–33 (MAFCNKLSGILRQGVSQSSNGPVTSMLGSLRYM) directs the protein to the mitochondrion. Residues 35-113 (SKLFVGGLSW…RQIRVNLATE (79 aa)) form the RRM domain. A Phosphoserine modification is found at Ser43. The segment at 113–136 (ERSSAPRSSFGGGGGYGGGGGGGY) is disordered. Residues 122 to 136 (FGGGGGYGGGGGGGY) are compositionally biased toward gly residues. The tract at residues 123 to 135 (GGGGGYGGGGGGG) is glycine-rich (GR) required for cell-to-cell movement.

The protein belongs to the GR-RBP family. Binds to small phloem-mobile single-stranded RNAs (ss-sRNA, e.g. small interfering RNA (siRNA) and microRNA (miRNA)) in the phloeme exudate, including viral-derived sRNA (vsiRNA). In terms of tissue distribution, abundantly expressed in young plants, root tips, and flowers, but weakly in mature leaves and stems, implying highly expression in actively proliferating organs.

The protein resides in the mitochondrion. It is found in the secreted. Possibly has a role in RNA transcription or processing during stress. Binds sequence non-specifically to RNAs and DNAs. Mediates cell-to-cell trafficking of RNA interference (RNAi) signals (small RNAs (sRNA), e.g. small interfering RNA (siRNA) and microRNA (miRNA)) which regulate growth and development, as well as responses to environmental inputs, including pathogen attack; can compromise zucchini yellow mosaic virus (ZYMV) and tobacco rattle virus (TRV) infections at the early stage. This is Glycine-rich RNA-binding protein 4, mitochondrial from Arabidopsis thaliana (Mouse-ear cress).